The chain runs to 82 residues: RNA-binding protein Hfq (82 aa).

Residues 10 to 69 form the Sm domain; that stretch reads DPFLNALRREHVPVSIYLVNGIKLQGQIESFDQYVVLLRNTVTQMVYKHAISTIVPGRAV.

This sequence belongs to the Hfq family. Homohexamer.

RNA chaperone that binds small regulatory RNA (sRNAs) and mRNAs to facilitate mRNA translational regulation in response to envelope stress, environmental stress and changes in metabolite concentrations. Also binds with high specificity to tRNAs. The protein is RNA-binding protein Hfq of Albidiferax ferrireducens (strain ATCC BAA-621 / DSM 15236 / T118) (Rhodoferax ferrireducens).